Reading from the N-terminus, the 305-residue chain is UPF0282 protein Tneu_0934 (305 aa).

It belongs to the UPF0282 family.

This chain is UPF0282 protein Tneu_0934, found in Pyrobaculum neutrophilum (strain DSM 2338 / JCM 9278 / NBRC 100436 / V24Sta) (Thermoproteus neutrophilus).